The following is an 88-amino-acid chain: Small ribosomal subunit protein bS18 (88 aa).

Residues 1-22 (MSTKNAKPKKEAQRRPSRKAKV) form a disordered region.

This sequence belongs to the bacterial ribosomal protein bS18 family. As to quaternary structure, part of the 30S ribosomal subunit. Forms a tight heterodimer with protein bS6.

Its function is as follows. Binds as a heterodimer with protein bS6 to the central domain of the 16S rRNA, where it helps stabilize the platform of the 30S subunit. The protein is Small ribosomal subunit protein bS18 (rpsR) of Thermus thermophilus (strain ATCC BAA-163 / DSM 7039 / HB27).